The chain runs to 462 residues: Integrator complex subunit 12 (462 aa).

The disordered stretch occupies residues 42–129; it reads GIDSSYRPSQ…LEKPETQSSP (88 aa). The span at 59–86 shows a compositional bias: polar residues; sequence ISSTKNISIKQEPKISSSLPSGNNNGKV. Lys68 is covalently cross-linked (Glycyl lysine isopeptide (Lys-Gly) (interchain with G-Cter in SUMO2)). Positions 88–124 are enriched in basic and acidic residues; that stretch reads TTEKVKKEAEKRPADKMKSDITEGVDIPKKPRLEKPE. Ser128 carries the phosphoserine modification. The PHD-type zinc finger occupies 159-215; the sequence is GLACVVCRQMMVASGNQLVECQECHNLYHRDCHKPQVTDKEANDPRLVWYCARCTRQ. Lys254 participates in a covalent cross-link: Glycyl lysine isopeptide (Lys-Gly) (interchain with G-Cter in SUMO2). A compositionally biased stretch (polar residues) spans 301 to 328; the sequence is SSAGPSTAKLSSTTQNSTGKPATSSANQ. Residues 301–462 form a disordered region; sequence SSAGPSTAKL…KKAAQKKLKK (162 aa). 2 stretches are compositionally biased toward low complexity: residues 347 to 358 and 396 to 437; these read KIGSNNSTTPTV and GNSS…GPTS. Over residues 449 to 462 the composition is skewed to basic residues; that stretch reads QMVKKKAAQKKLKK.

It belongs to the Integrator subunit 12 family. As to quaternary structure, component of the Integrator complex, composed of core subunits INTS1, INTS2, INTS3, INTS4, INTS5, INTS6, INTS7, INTS8, INTS9/RC74, INTS10, INTS11/CPSF3L, INTS12, INTS13, INTS14 and INTS15. The core complex associates with protein phosphatase 2A subunits PPP2CA and PPP2R1A, to form the Integrator-PP2A (INTAC) complex. In terms of processing, dephosphorylated at Ser-128 by the PNUTS-PP1 complex, promoting RNA polymerase II transcription pause-release.

Its subcellular location is the nucleus. Component of the integrator complex, a multiprotein complex that terminates RNA polymerase II (Pol II) transcription in the promoter-proximal region of genes. The integrator complex provides a quality checkpoint during transcription elongation by driving premature transcription termination of transcripts that are unfavorably configured for transcriptional elongation: the complex terminates transcription by (1) catalyzing dephosphorylation of the C-terminal domain (CTD) of Pol II subunit POLR2A/RPB1 and SUPT5H/SPT5, (2) degrading the exiting nascent RNA transcript via endonuclease activity and (3) promoting the release of Pol II from bound DNA. The integrator complex is also involved in terminating the synthesis of non-coding Pol II transcripts, such as enhancer RNAs (eRNAs), small nuclear RNAs (snRNAs), telomerase RNAs and long non-coding RNAs (lncRNAs). Mediates recruitment of cytoplasmic dynein to the nuclear envelope, probably as component of the integrator complex. The polypeptide is Integrator complex subunit 12 (INTS12) (Macaca fascicularis (Crab-eating macaque)).